A 526-amino-acid polypeptide reads, in one-letter code: Microphthalmia-associated transcription factor (526 aa).

The disordered stretch occupies residues 1–54 (MQSESGIVPDFEVGEEFHEEPKTYYELKSQPLKSSSSAEHPGASKPPISSSSMT). S5 is modified (phosphoserine; by MTOR). Over residues 15-25 (EEFHEEPKTYY) the composition is skewed to basic and acidic residues. The segment covering 41–54 (PGASKPPISSSSMT) has biased composition (low complexity). Phosphoserine; by MAPK is present on S180. A transactivation region spans residues 224-295 (DDVIDDIISL…PNIKRELTAC (72 aa)). S280 carries the post-translational modification Phosphoserine; by MARK3. Residue K289 forms a Glycyl lysine isopeptide (Lys-Gly) (interchain with G-Cter in SUMO) linkage. The region spanning 311–364 (QKKDNHNLIERRRRFNINDRIKELGTLIPKSNDPDMRWNKGTILKASVDYIRKL) is the bHLH domain. A coiled-coil region spans residues 355 to 402 (KASVDYIRKLQREQQRAKELENRQKKLEHANRHLLLRIQELEMQARAH). A leucine-zipper region spans residues 374–395 (LENRQKKLEHANRHLLLRIQEL). The interval 401–431 (AHGLSLIPSTGLCSPDLVNRIIKQEPVLENC) is DNA-binding regulation. Phosphoserine; by GSK3 is present on S405. A Phosphoserine modification is found at S414. Residue K423 forms a Glycyl lysine isopeptide (Lys-Gly) (interchain with G-Cter in SUMO) linkage. Position 491 is a phosphoserine (S491). The disordered stretch occupies residues 496–526 (TDPLLSSVSPGASKTSSRRSSMSMEETEHTC). A compositionally biased stretch (polar residues) spans 499–509 (LLSSVSPGASK). A Phosphoserine; by RPS6KA1 modification is found at S516.

This sequence belongs to the MiT/TFE family. Homodimer or heterodimer; dimerization is mediated via the coiled coil region. Efficient DNA binding requires dimerization with another bHLH protein. Binds DNA in the form of homodimer or heterodimer with either TFE3, TFEB or TFEC. Interacts with small GTPases Rag (RagA/RRAGA, RagB/RRAGB, RagC/RRAGC and/or RagD/RRAGD); promoting its recruitment to lysosomal membrane in the presence of nutrients. Interacts with KARS1. Identified in a complex with HINT1 and CTNNB1. Interacts with VSX2. When nutrients are present, phosphorylation by MTOR at Ser-5 via non-canonical mTORC1 pathway promotes ubiquitination by the SCF(BTRC) complex, followed by degradation. Phosphorylation at Ser-405 significantly enhances the ability to bind the tyrosinase promoter. Phosphorylation by MARK3/cTAK1 at Ser-280 promotes association with 14-3-3/YWHA adapters and retention in the cytosol. Phosphorylated at Ser-180 and Ser-516 following KIT signaling, triggering a short live activation: Phosphorylation at Ser-180 and Ser-516 by MAPK and RPS6KA1, respectively, activate the transcription factor activity but also promote ubiquitination and subsequent degradation by the proteasome. Phosphorylated in response to blue light (415nm). Post-translationally, ubiquitinated by the SCF(BTRC) and SCF(FBXW11) complexes following phosphorylation ar Ser-5 by MTOR, leading to its degradation by the proteasome. Ubiquitinated following phosphorylation at Ser-180, leading to subsequent degradation by the proteasome. Deubiquitinated by USP13, preventing its degradation. Expressed in melanocytes (at protein level). As to expression, expressed in the retinal pigment epithelium, brain, and placenta. Expressed in the kidney. In terms of tissue distribution, expressed in the kidney and retinal pigment epithelium. Expressed in the kidney. As to expression, expressed in melanocytes.

It is found in the nucleus. The protein resides in the cytoplasm. It localises to the lysosome membrane. Transcription factor that acts as a master regulator of melanocyte survival and differentiation as well as melanosome biogenesis. Binds to M-boxes (5'-TCATGTG-3') and symmetrical DNA sequences (E-boxes) (5'-CACGTG-3') found in the promoter of pigmentation genes, such as tyrosinase (TYR). Involved in the cellular response to amino acid availability by acting downstream of MTOR: in the presence of nutrients, MITF phosphorylation by MTOR promotes its inactivation. Upon starvation or lysosomal stress, inhibition of MTOR induces MITF dephosphorylation, resulting in transcription factor activity. Plays an important role in melanocyte development by regulating the expression of tyrosinase (TYR) and tyrosinase-related protein 1 (TYRP1). Plays a critical role in the differentiation of various cell types, such as neural crest-derived melanocytes, mast cells, osteoclasts and optic cup-derived retinal pigment epithelium. This Homo sapiens (Human) protein is Microphthalmia-associated transcription factor.